A 179-amino-acid chain; its full sequence is Cell division protein SepF (179 aa).

The interval 18-55 is disordered; it reads EDSSLPYEKRDEPVFTPVNSSQEPALPMNQPSQSAGTK. Positions 34–55 are enriched in polar residues; the sequence is PVNSSQEPALPMNQPSQSAGTK.

This sequence belongs to the SepF family. As to quaternary structure, homodimer. Interacts with FtsZ.

It is found in the cytoplasm. In terms of biological role, cell division protein that is part of the divisome complex and is recruited early to the Z-ring. Probably stimulates Z-ring formation, perhaps through the cross-linking of FtsZ protofilaments. Its function overlaps with FtsA. The polypeptide is Cell division protein SepF (Streptococcus pneumoniae (strain ATCC 700669 / Spain 23F-1)).